A 106-amino-acid polypeptide reads, in one-letter code: ATP-dependent Clp protease adapter protein ClpS (106 aa).

Belongs to the ClpS family. As to quaternary structure, binds to the N-terminal domain of the chaperone ClpA.

Its function is as follows. Involved in the modulation of the specificity of the ClpAP-mediated ATP-dependent protein degradation. This is ATP-dependent Clp protease adapter protein ClpS from Vibrio parahaemolyticus serotype O3:K6 (strain RIMD 2210633).